Consider the following 318-residue polypeptide: Mitochondrial thiamine pyrophosphate carrier (318 aa).

Solcar repeat units lie at residues 13-106, 116-202, and 214-309; these read NSKL…LTEL, HQFS…LKRA, and TGNL…FCNL. Helical transmembrane passes span 19–39, 87–107, 122–142, 173–193, 220–240, and 293–313; these read AVAG…LDVI, ILSI…TELL, FVCG…VDVL, VFYK…GLQF, LLCG…LDLF, and ALST…FHCI.

Belongs to the mitochondrial carrier (TC 2.A.29) family.

The protein localises to the mitochondrion membrane. The enzyme catalyses thiamine phosphate(out) + thiamine diphosphate(in) = thiamine phosphate(in) + thiamine diphosphate(out). In terms of biological role, mitochondrial transporter mediating uptake of thiamine diphosphate into mitochondria. It is not clear if the antiporter activity is affected by the membrane potential or by the proton electrochemical gradient. The sequence is that of Mitochondrial thiamine pyrophosphate carrier (Slc25a19) from Rattus norvegicus (Rat).